A 665-amino-acid polypeptide reads, in one-letter code: Pre-mRNA-processing factor 39 (665 aa).

Residues 1–11 show a composition bias toward basic and acidic residues; sequence MQNSHMEEYRN. Residues 1 to 28 are disordered; that stretch reads MQNSHMEEYRNSDNGSTGNSSEVAVVEH. Residues 12–22 are compositionally biased toward polar residues; the sequence is SDNGSTGNSSE. Ser-44 carries the post-translational modification Phosphoserine. 7 HAT repeats span residues 107-139, 141-173, 181-216, 218-251, 331-363, 365-397, and 402-434; these read NHLM…LEKR, DNIK…FLKE, ETNT…WENE, GNLR…HVQN, FEEG…FEIE, GTHE…YMEN, and GVRH…QQGN. Positions 599-622 are enriched in basic and acidic residues; that stretch reads QDTLKRKAENGSEEPEEKKAHTED. Positions 599 to 625 are disordered; that stretch reads QDTLKRKAENGSEEPEEKKAHTEDLSS.

It belongs to the PRP39 family.

It is found in the nucleus. Functionally, involved in pre-mRNA splicing. This is Pre-mRNA-processing factor 39 (Prpf39) from Mus musculus (Mouse).